The chain runs to 375 residues: Erythronate-4-phosphate dehydrogenase (375 aa).

Substrate contacts are provided by Ser-45 and Thr-66. The NAD(+) site is built by Asp-146 and Thr-175. Arg-208 is an active-site residue. Asp-232 is an NAD(+) binding site. Glu-237 is an active-site residue. Catalysis depends on His-254, which acts as the Proton donor. Gly-257 is an NAD(+) binding site. Residue Tyr-258 participates in substrate binding.

Belongs to the D-isomer specific 2-hydroxyacid dehydrogenase family. PdxB subfamily. In terms of assembly, homodimer.

Its subcellular location is the cytoplasm. The catalysed reaction is 4-phospho-D-erythronate + NAD(+) = (R)-3-hydroxy-2-oxo-4-phosphooxybutanoate + NADH + H(+). The protein operates within cofactor biosynthesis; pyridoxine 5'-phosphate biosynthesis; pyridoxine 5'-phosphate from D-erythrose 4-phosphate: step 2/5. Its function is as follows. Catalyzes the oxidation of erythronate-4-phosphate to 3-hydroxy-2-oxo-4-phosphonooxybutanoate. This chain is Erythronate-4-phosphate dehydrogenase, found in Yersinia pseudotuberculosis serotype O:1b (strain IP 31758).